A 372-amino-acid polypeptide reads, in one-letter code: 2,7-anhydro-N-acetylneuraminate hydratase (372 aa).

NAD(+) contacts are provided by tyrosine 11, phenylalanine 12, aspartate 33, asparagine 36, threonine 68, asparagine 70, histidine 73, glutamate 90, lysine 91, and tryptophan 160.

The protein belongs to the Gfo/Idh/MocA family. As to quaternary structure, homodimer. NAD(+) serves as cofactor.

The catalysed reaction is N-acetyl-2,7-anhydro-alpha-neuraminate + H2O = N-acetyl-alpha-neuraminate. It carries out the reaction 2-deoxy-2,3-dehydro-N-acetylneuraminate + H2O = N-acetyl-alpha-neuraminate. Its activity is regulated as follows. All conversions require NAD(+) as a cofactor, which is regenerated in the reaction. The presence of EGTA and several divalent cations does not affect the activity. Hydratase involved in the degradation of sialic acids. Catalyzes the reversible conversion of the dehydrated form of N-acetylneuraminate (Neu5Ac), 2,7-anhydro-N-acetylneuraminate (2,7-AN), to Neu5Ac. Also catalyzes the irreversible conversion of 2-deoxy-2,3-didehydro-N-acetylneuraminate (2,3-EN) to Neu5Ac. The reaction mechanism involves keto intermediates and the transient formation of NADH. The protein is 2,7-anhydro-N-acetylneuraminate hydratase of Escherichia coli (strain K12).